The primary structure comprises 354 residues: Membrane progestin receptor beta (354 aa).

Over 1 to 76 (MTTAILERLS…FSLFQKHNEV (76 aa)) the chain is Cytoplasmic. A helical transmembrane segment spans residues 77–97 (VNVWTHLLAALAVLLRFWAFV). The Extracellular segment spans residues 98–111 (EAGALQWASPHTLP). A helical membrane pass occupies residues 112–132 (LLLFILSSITYLTCSLLAHLL). Residues 133 to 173 (QSKSELSHYTFYFVDYVGVSVYQYGSALAHFFYSSDQAWYE) lie on the Cytoplasmic side of the membrane. Residues 174–194 (LFWIFFLPAAAFCGWLSCAGC) traverse the membrane as a helical segment. The Extracellular portion of the chain corresponds to 195–213 (CYAKYRYRRPYPVMRKICQ). A helical membrane pass occupies residues 214–234 (VVPAGLAFVLDISPVAHRVAL). Residues 235–243 (CHLAGCQEQ) are Cytoplasmic-facing. A helical membrane pass occupies residues 244-264 (AAWYHTLQILFFLVSAYFFSC). Topologically, residues 265-283 (PVPEKYFPGSCDIVGHGHQ) are extracellular. Residues 284-304 (IFHAFLSVCTLSQLEAILLDY) form a helical membrane-spanning segment. Residues 305–315 (QGRHEIFLQRH) are Cytoplasmic-facing. Residues 316 to 336 (GPLSVYSACLSFFVLAACSAA) traverse the membrane as a helical segment. Residues 337-354 (TATLLRHKVKDRLIKKDS) are Extracellular-facing.

Belongs to the ADIPOR family. In terms of tissue distribution, expressed in brain and testis.

Its subcellular location is the cell membrane. Plasma membrane progesterone (P4) receptor coupled to G proteins. Seems to act through a G(i) mediated pathway. May be involved in oocyte maturation. Also binds dehydroepiandrosterone (DHEA), pregnanolone, pregnenolone and allopregnanolone. The chain is Membrane progestin receptor beta from Mus musculus (Mouse).